We begin with the raw amino-acid sequence, 344 residues long: Methionine import ATP-binding protein MetN (344 aa).

Positions 2-241 (IELQGLSQRF…PQHEVTRAMI (240 aa)) constitute an ABC transporter domain. 38–45 (GRSGAGKS) lines the ATP pocket.

Belongs to the ABC transporter superfamily. Methionine importer (TC 3.A.1.24) family. The complex is composed of two ATP-binding proteins (MetN), two transmembrane proteins (MetI) and a solute-binding protein (MetQ).

It is found in the cell inner membrane. The enzyme catalyses L-methionine(out) + ATP + H2O = L-methionine(in) + ADP + phosphate + H(+). It catalyses the reaction D-methionine(out) + ATP + H2O = D-methionine(in) + ADP + phosphate + H(+). Part of the ABC transporter complex MetNIQ involved in methionine import. Responsible for energy coupling to the transport system. This chain is Methionine import ATP-binding protein MetN, found in Cupriavidus metallidurans (strain ATCC 43123 / DSM 2839 / NBRC 102507 / CH34) (Ralstonia metallidurans).